A 249-amino-acid polypeptide reads, in one-letter code: tRNA (guanine-N(1)-)-methyltransferase (249 aa).

S-adenosyl-L-methionine contacts are provided by residues G113 and 133–138 (IGDYVL).

Belongs to the RNA methyltransferase TrmD family. In terms of assembly, homodimer.

Its subcellular location is the cytoplasm. The enzyme catalyses guanosine(37) in tRNA + S-adenosyl-L-methionine = N(1)-methylguanosine(37) in tRNA + S-adenosyl-L-homocysteine + H(+). In terms of biological role, specifically methylates guanosine-37 in various tRNAs. The protein is tRNA (guanine-N(1)-)-methyltransferase of Aeromonas hydrophila subsp. hydrophila (strain ATCC 7966 / DSM 30187 / BCRC 13018 / CCUG 14551 / JCM 1027 / KCTC 2358 / NCIMB 9240 / NCTC 8049).